A 327-amino-acid chain; its full sequence is Peroxidase 21 (327 aa).

The N-terminal stretch at M1–G28 is a signal peptide. 4 cysteine pairs are disulfide-bonded: C39-C118, C72-C77, C124-C323, and C204-C231. H70 acts as the Proton acceptor in catalysis. Ca(2+)-binding residues include D71, V74, D78, and S80. P167 is a binding site for substrate. An N-linked (GlcNAc...) asparagine glycan is attached at N170. H197 contacts heme b. A Ca(2+)-binding site is contributed by S198. D247, T250, and D255 together coordinate Ca(2+).

It belongs to the peroxidase family. Classical plant (class III) peroxidase subfamily. Heme b is required as a cofactor. It depends on Ca(2+) as a cofactor. In terms of tissue distribution, preferentially expressed in roots and leaves, slightly in stems.

It carries out the reaction 2 a phenolic donor + H2O2 = 2 a phenolic radical donor + 2 H2O. Removal of H(2)O(2), oxidation of toxic reductants, biosynthesis and degradation of lignin, suberization, auxin catabolism, response to environmental stresses such as wounding, pathogen attack and oxidative stress. These functions might be dependent on each isozyme/isoform in each plant tissue. In terms of biological role, might function as heat shock-like defense protein. May be implicated in the systemic acquired resistance response. In Arabidopsis thaliana (Mouse-ear cress), this protein is Peroxidase 21 (PER21).